Here is a 206-residue protein sequence, read N- to C-terminus: N-(5'-phosphoribosyl)anthranilate isomerase (206 aa).

The protein belongs to the TrpF family.

The enzyme catalyses N-(5-phospho-beta-D-ribosyl)anthranilate = 1-(2-carboxyphenylamino)-1-deoxy-D-ribulose 5-phosphate. It functions in the pathway amino-acid biosynthesis; L-tryptophan biosynthesis; L-tryptophan from chorismate: step 3/5. This is N-(5'-phosphoribosyl)anthranilate isomerase from Pseudomonas syringae pv. syringae (strain B728a).